Reading from the N-terminus, the 275-residue chain is Hydroxyethylthiazole kinase (275 aa).

Substrate is bound at residue Met-50. Arg-126 and Ser-171 together coordinate ATP. Ala-200 is a substrate binding site.

Belongs to the Thz kinase family. The cofactor is Mg(2+).

It carries out the reaction 5-(2-hydroxyethyl)-4-methylthiazole + ATP = 4-methyl-5-(2-phosphooxyethyl)-thiazole + ADP + H(+). Its pathway is cofactor biosynthesis; thiamine diphosphate biosynthesis; 4-methyl-5-(2-phosphoethyl)-thiazole from 5-(2-hydroxyethyl)-4-methylthiazole: step 1/1. Its function is as follows. Catalyzes the phosphorylation of the hydroxyl group of 4-methyl-5-beta-hydroxyethylthiazole (THZ). The polypeptide is Hydroxyethylthiazole kinase (Acinetobacter baumannii (strain SDF)).